Consider the following 500-residue polypeptide: Glycerol kinase (500 aa).

T13 contacts ADP. Residues T13, T14, and S15 each contribute to the ATP site. Sn-glycerol 3-phosphate is bound at residue T13. R17 is a binding site for ADP. 4 residues coordinate sn-glycerol 3-phosphate: R83, E84, Y135, and D245. Residues R83, E84, Y135, D245, and Q246 each coordinate glycerol. T267 and G310 together coordinate ADP. Residues T267, G310, Q314, and G411 each coordinate ATP. Residues G411 and N415 each contribute to the ADP site.

Belongs to the FGGY kinase family. In terms of assembly, homotetramer and homodimer (in equilibrium).

The enzyme catalyses glycerol + ATP = sn-glycerol 3-phosphate + ADP + H(+). Its pathway is polyol metabolism; glycerol degradation via glycerol kinase pathway; sn-glycerol 3-phosphate from glycerol: step 1/1. Activated by phosphorylation and inhibited by fructose 1,6-bisphosphate (FBP). Functionally, key enzyme in the regulation of glycerol uptake and metabolism. Catalyzes the phosphorylation of glycerol to yield sn-glycerol 3-phosphate. This is Glycerol kinase from Carboxydothermus hydrogenoformans (strain ATCC BAA-161 / DSM 6008 / Z-2901).